We begin with the raw amino-acid sequence, 442 residues long: 3-phosphoshikimate 1-carboxyvinyltransferase (442 aa).

Residues Lys-23, Ser-24, and Arg-28 each coordinate 3-phosphoshikimate. A phosphoenolpyruvate-binding site is contributed by Lys-23. Residues Gly-95 and Arg-123 each coordinate phosphoenolpyruvate. 3-phosphoshikimate is bound by residues Ser-167, Gln-169, Asp-315, and Lys-342. Residue Gln-169 participates in phosphoenolpyruvate binding. The Proton acceptor role is filled by Asp-315. Phosphoenolpyruvate contacts are provided by Arg-346 and Arg-390.

It belongs to the EPSP synthase family. In terms of assembly, monomer.

The protein localises to the cytoplasm. It catalyses the reaction 3-phosphoshikimate + phosphoenolpyruvate = 5-O-(1-carboxyvinyl)-3-phosphoshikimate + phosphate. It participates in metabolic intermediate biosynthesis; chorismate biosynthesis; chorismate from D-erythrose 4-phosphate and phosphoenolpyruvate: step 6/7. Catalyzes the transfer of the enolpyruvyl moiety of phosphoenolpyruvate (PEP) to the 5-hydroxyl of shikimate-3-phosphate (S3P) to produce enolpyruvyl shikimate-3-phosphate and inorganic phosphate. The protein is 3-phosphoshikimate 1-carboxyvinyltransferase of Dichelobacter nodosus (strain VCS1703A).